The following is a 523-amino-acid chain: Calcium-dependent protein kinase 28 (523 aa).

A lipid anchor (N-myristoyl glycine) is attached at Gly-2. A lipid anchor (S-palmitoyl cysteine) is attached at Cys-4. The disordered stretch occupies residues 15–43 (SSRRSSQTKSKAAPTPIDTKASTKRRTGS). In terms of domain architecture, Protein kinase spans 62–322 (YTIGKLLGHG…AAQALSHAWV (261 aa)). Residues 68–76 (LGHGQFGYT) and Lys-91 contribute to the ATP site. Residue Asp-188 is the Proton acceptor of the active site. Residues Ser-228 and Ser-318 each carry the phosphoserine modification. Residues 328–358 (ATDIPVDISVLNNLRQFVRYSRLKQFALRAL) are autoinhibitory domain. EF-hand domains lie at 365–400 (AEISDLRDQFDAIDVDKNGVISLEEMRQALAKDLPW), 402–437 (LKDSRVAEILEAIDSNTDGLVDFTEFVAAALHVHQL), 444–479 (KWQLRSRAAFEKFDLDKDGYITPEELRMHTGLRGSI), and 482–509 (LLDEADIDRDGKISLHEFRRLLRTASIS). Ca(2+) contacts are provided by Asp-378, Asp-380, Asn-382, Glu-389, Asp-415, Asn-417, Asp-419, Glu-426, Asp-457, Asp-459, Asp-461, Tyr-463, Glu-468, Asp-487, Asp-489, Asp-491, and Lys-493. Ser-495 is subject to Phosphoserine. Glu-498 serves as a coordination point for Ca(2+). Ser-515 is modified (phosphoserine).

This sequence belongs to the protein kinase superfamily. Ser/Thr protein kinase family. CDPK subfamily. As to quaternary structure, interacts with BIK1. As to expression, expressed in vascular and meristematic tissues throughout plant development.

The protein resides in the cell membrane. It catalyses the reaction L-seryl-[protein] + ATP = O-phospho-L-seryl-[protein] + ADP + H(+). The enzyme catalyses L-threonyl-[protein] + ATP = O-phospho-L-threonyl-[protein] + ADP + H(+). With respect to regulation, activated by calcium. Autophosphorylation plays an important role in the regulation of the kinase activity. Its function is as follows. May play a role in signal transduction pathways that involve calcium as a second messenger. Acts as a developmentally controlled regulator for coordinated stem elongation and vascular development. Acts as a key component which contributes to the developmental switch that establishes the transition from vegetative to reproductive growth. Involved in pathogen-associated molecular pattern (PAMP)-triggered immunity (PTI) signaling. Interacts with and phosphorylates the kinase BIK1, a central rate-limiting kinase in PTI signaling. Facilitates BIK1 turnover and negatively regulates BIK1-mediated immune responses triggered by several PAMPs. Its kinase activity is necessary and sufficient for its function in PTI signaling. This Arabidopsis thaliana (Mouse-ear cress) protein is Calcium-dependent protein kinase 28.